A 509-amino-acid polypeptide reads, in one-letter code: Cardiolipin synthase 1 (509 aa).

The next 3 membrane-spanning stretches (helical) occupy residues Pro4–Thr24, Tyr30–Ile50, and Leu59–Phe79. PLD phosphodiesterase domains follow at residues Val238–Tyr265 and Lys422–Ser449. Catalysis depends on residues His243, Lys245, Asp250, His427, Lys429, and Asp434.

It belongs to the phospholipase D family. Cardiolipin synthase subfamily.

It is found in the cell membrane. The catalysed reaction is 2 a 1,2-diacyl-sn-glycero-3-phospho-(1'-sn-glycerol) = a cardiolipin + glycerol. In terms of biological role, catalyzes the reversible phosphatidyl group transfer from one phosphatidylglycerol molecule to another to form cardiolipin (CL) (diphosphatidylglycerol) and glycerol. The polypeptide is Cardiolipin synthase 1 (cls1) (Bacillus cereus (strain ATCC 14579 / DSM 31 / CCUG 7414 / JCM 2152 / NBRC 15305 / NCIMB 9373 / NCTC 2599 / NRRL B-3711)).